The chain runs to 134 residues: Small ribosomal subunit protein uS9 (134 aa).

Residues 113–134 are disordered; that stretch reads REVERKKYGLKKARRAPQFSKR. The segment covering 120–134 has biased composition (basic residues); sequence YGLKKARRAPQFSKR.

The protein belongs to the universal ribosomal protein uS9 family.

The chain is Small ribosomal subunit protein uS9 (rpsI) from Thermotoga maritima (strain ATCC 43589 / DSM 3109 / JCM 10099 / NBRC 100826 / MSB8).